The sequence spans 658 residues: Protein teflon (658 aa).

Residues 33–56 (LYCHFCRDLFTQLPEFLRHLQSNH) form a C2H2-type 1 zinc finger. A disordered region spans residues 80-131 (DKAHEDAQSAGHNSSSGDSRSLMNSEDSRAIDGSEENSDNSPVKPEQIGKQN). Positions 89-104 (AGHNSSSGDSRSLMNS) are enriched in polar residues. 2 consecutive C2H2-type zinc fingers follow at residues 608-630 (YFCK…LISH) and 634-657 (FQCT…RNAH).

The protein belongs to the Teflon family.

The protein resides in the nucleus. It localises to the chromosome. In terms of biological role, specifically required in males for proper segregation of autosomal bivalents at meiosis I. Expression is required in the male germ line prior to spermatocyte stage S4. May have a role as a bridging molecule maintaining adhesion to hold autosome bivalents together via heterochromatic connections. The sequence is that of Protein teflon from Drosophila simulans (Fruit fly).